The chain runs to 391 residues: Phosphoglycerate kinase (391 aa).

Residues aspartate 21–asparagine 23, arginine 36, histidine 59–arginine 62, arginine 113, and arginine 146 contribute to the substrate site. ATP-binding positions include lysine 197, glutamate 319, and glycine 345 to threonine 348.

It belongs to the phosphoglycerate kinase family. As to quaternary structure, monomer.

The protein resides in the cytoplasm. It catalyses the reaction (2R)-3-phosphoglycerate + ATP = (2R)-3-phospho-glyceroyl phosphate + ADP. It functions in the pathway carbohydrate degradation; glycolysis; pyruvate from D-glyceraldehyde 3-phosphate: step 2/5. The sequence is that of Phosphoglycerate kinase from Shewanella baltica (strain OS185).